A 515-amino-acid chain; its full sequence is 3-[(3aS,4S,7aS)-7a-methyl-1,5-dioxo-octahydro-1H-inden-4-yl]propanoyl:CoA ligase (515 aa).

ATP is bound by residues 185–193 (TSGTTGRSK), D398, R413, and K504.

The protein belongs to the ATP-dependent AMP-binding enzyme family.

It catalyses the reaction 3-[(3aS,4S,7aS)-7a-methyl-1,5-dioxo-octahydro-1H-inden-4-yl]propanoate + ATP + CoA = 3-[(3aS,4S,7aS)-7a-methyl-1,5-dioxo-octahydro-1H-inden-4-yl]propanoyl-CoA + AMP + diphosphate. Its function is as follows. Involved in the catabolism of the rings C and D of cholesterol. Catalyzes the ATP-dependent CoA thioesterification of 3aalpha-H-4alpha(3'-propanoate)-7abeta-methylhexahydro-1,5-indanedione (HIP). This Rhodococcus jostii (strain RHA1) protein is 3-[(3aS,4S,7aS)-7a-methyl-1,5-dioxo-octahydro-1H-inden-4-yl]propanoyl:CoA ligase.